The following is a 431-amino-acid chain: Histidine--tRNA ligase (431 aa).

It belongs to the class-II aminoacyl-tRNA synthetase family.

Its subcellular location is the cytoplasm. It catalyses the reaction tRNA(His) + L-histidine + ATP = L-histidyl-tRNA(His) + AMP + diphosphate + H(+). The sequence is that of Histidine--tRNA ligase (hisS) from Pyrococcus horikoshii (strain ATCC 700860 / DSM 12428 / JCM 9974 / NBRC 100139 / OT-3).